The primary structure comprises 68 residues: U-poneritoxin(01)-Om4a (68 aa).

An N-terminal signal peptide occupies residues M1–A25. Residues E26–A39 constitute a propeptide that is removed on maturation.

The protein belongs to the formicidae venom precursor-01 superfamily. Homo- or heterodimer with PLP7 (AC A0A348G6I9); disulfide-linked. Post-translationally, truncated sequences of this peptide have also been found in the venom. It is possible they have been cleaved in the venom. In terms of tissue distribution, expressed by the venom gland.

The protein localises to the secreted. This homodimer composed of two cationic amphipathic alpha-helical peptides has antimicrobial activities against E.coli (MIC=3.1 uM), S.aureus (MIC=3.1 uM), and S.cerevisiae (MIC=3.1 uM). It also shows histamine-releasing activity (66.4% at 10 uM) and a weak hemolytic activity (10.5% at 50 uM). This is U-poneritoxin(01)-Om4a from Odontomachus monticola (Trap-jaw ant).